The chain runs to 164 residues: Galectin-3 (164 aa).

Positions 9 to 154 constitute a Galectin domain; sequence STVDLSEPLK…FSDVLGVTVL (146 aa). 6 residues coordinate a carbohydrate: N45, R64, N73, R81, E84, and N138.

As to quaternary structure, homotetramer. Oligomerization is required for carbohydrate binding.

Its subcellular location is the secreted. It localises to the extracellular space. It is found in the extracellular matrix. The protein resides in the cell wall. Binds complex carbohydrates, such as chitooligosaccharides. Does not bind lactose. May play a role in fruiting body formation. In Coprinopsis cinerea (Inky cap fungus), this protein is Galectin-3 (Cgl3).